The primary structure comprises 158 residues: 6,7-dimethyl-8-ribityllumazine synthase (158 aa).

Residues Phe-24, Cys-62–Glu-64, and Ala-86–Ile-88 contribute to the 5-amino-6-(D-ribitylamino)uracil site. Asp-91–Thr-92 is a binding site for (2S)-2-hydroxy-3-oxobutyl phosphate. The active-site Proton donor is His-94. Phe-119 serves as a coordination point for 5-amino-6-(D-ribitylamino)uracil. Arg-133 contacts (2S)-2-hydroxy-3-oxobutyl phosphate.

The protein belongs to the DMRL synthase family.

It catalyses the reaction (2S)-2-hydroxy-3-oxobutyl phosphate + 5-amino-6-(D-ribitylamino)uracil = 6,7-dimethyl-8-(1-D-ribityl)lumazine + phosphate + 2 H2O + H(+). The protein operates within cofactor biosynthesis; riboflavin biosynthesis; riboflavin from 2-hydroxy-3-oxobutyl phosphate and 5-amino-6-(D-ribitylamino)uracil: step 1/2. In terms of biological role, catalyzes the formation of 6,7-dimethyl-8-ribityllumazine by condensation of 5-amino-6-(D-ribitylamino)uracil with 3,4-dihydroxy-2-butanone 4-phosphate. This is the penultimate step in the biosynthesis of riboflavin. This Picosynechococcus sp. (strain ATCC 27264 / PCC 7002 / PR-6) (Agmenellum quadruplicatum) protein is 6,7-dimethyl-8-ribityllumazine synthase.